The following is a 375-amino-acid chain: Odorant receptor 10 (375 aa).

6 consecutive transmembrane segments (helical) span residues 32 to 52 (ISII…GHSW), 58 to 78 (VIIK…TLIL), 125 to 145 (NLAL…FTGV), 167 to 187 (IIYL…IPFT), 250 to 270 (YICF…LFLL), and 279 to 299 (IVIV…FYWH).

Belongs to the insect chemoreceptor superfamily. Heteromeric odorant receptor channel (TC 1.A.69) family. In terms of tissue distribution, expressed in female antenna, maxillary palp and proboscis. Expressed in female body. Expressed in male tissues.

It is found in the cell membrane. In terms of biological role, odorant receptor which complexes with Orco, a coreceptor, to form odorant-sensing units, providing sensitive and prolonged odorant signaling and calcium permeability. Can sense indole, 1-octen-3-ol, 3-methyindole and an insect repellent DEET. In Aedes albopictus (Asian tiger mosquito), this protein is Odorant receptor 10.